The primary structure comprises 321 residues: UDP-N-acetyl-alpha-D-glucosaminuronate decarboxylase (321 aa).

12 residues coordinate NAD(+): G12, F13, I14, D33, N34, Y36, G38, L76, T95, A117, Y148, and K152. Y148 acts as the Proton acceptor in catalysis.

The protein belongs to the NAD(P)-dependent epimerase/dehydratase family. Homodimer. NAD(+) serves as cofactor.

The catalysed reaction is UDP-2-acetamido-2-deoxy-alpha-D-glucuronate + H(+) = UDP-N-acetyl-alpha-D-xylosamine + CO2. Its activity is regulated as follows. Activity is completely inhibited by NADH but not by NADPH. In terms of biological role, decarboxylase involved in the biosynthesis of the nucleotide-sugar UDP-N-acetylxylosamine (UDP-XylNAc). Catalyzes the NAD-dependent decarboxylation of UDP-N-acetylglucosaminuronic acid (UDP-GlcNAcA) to UDP-XylNAc. Cannot use other UDP-uronates, such as UDP-glucuronic acid (UDP-GlcA) and UDP-galacturonic acid (UDP-GalA). This Bacillus cytotoxicus (strain DSM 22905 / CIP 110041 / 391-98 / NVH 391-98) protein is UDP-N-acetyl-alpha-D-glucosaminuronate decarboxylase.